The sequence spans 717 residues: Amino-acid acetyltransferase, mitochondrial (717 aa).

The N-terminal 23 residues, 1–23 (MFIWTKAPARGLGKASKILPKRD), are a transit peptide targeting the mitochondrion. Residues 35–70 (KQFHTATTSVRRSSSSAKERQRAERQQLTRLLKESP) are disordered. Low complexity predominate over residues 39-50 (TATTSVRRSSSS). Residues 51–70 (AKERQRAERQQLTRLLKESP) show a composition bias toward basic and acidic residues. One can recognise an N-acetyltransferase domain in the interval 518 to 691 (NPSIELADDP…GDVDDAKKRD (174 aa)).

Belongs to the acetyltransferase family.

It is found in the mitochondrion. It carries out the reaction L-glutamate + acetyl-CoA = N-acetyl-L-glutamate + CoA + H(+). It functions in the pathway amino-acid biosynthesis; L-arginine biosynthesis; N(2)-acetyl-L-ornithine from L-glutamate: step 1/4. In terms of biological role, N-acetylglutamate synthase involved in arginine biosynthesis. The chain is Amino-acid acetyltransferase, mitochondrial (arg2) from Pyrenophora tritici-repentis (strain Pt-1C-BFP) (Wheat tan spot fungus).